We begin with the raw amino-acid sequence, 193 residues long: Flagellin B1 (193 aa).

Positions 1 to 12 are excised as a propeptide; the sequence is MFEFITDEDERG.

The protein belongs to the archaeal flagellin family. In terms of processing, glycosylated.

Its subcellular location is the archaeal flagellum. Its function is as follows. Flagellin is the subunit protein which polymerizes to form the filaments of archaeal flagella. The chain is Flagellin B1 (flaB1) from Halobacterium salinarum (strain ATCC 700922 / JCM 11081 / NRC-1) (Halobacterium halobium).